The primary structure comprises 378 residues: Ferredoxin--NADP reductase, root isozyme, chloroplastic (378 aa).

Positions 1-17 are enriched in low complexity; the sequence is MATAVASQVAVSAPAGS. The segment at 1-27 is disordered; the sequence is MATAVASQVAVSAPAGSDRGLRSSGIQ. Residues 1-62 constitute a chloroplast transit peptide; that stretch reads MATAVASQVA…PRHANKVLCM (62 aa). Residues 93 to 221 form the FAD-binding FR-type domain; the sequence is KEPYTATIVS…TGPSGKIMLL (129 aa). FAD contacts are provided by residues 153–156, 174–176, Tyr-180, 195–197, and Thr-237; these read RLYS, CVR, and VCS. NADP(+) is bound by residues Ser-156 and Arg-176. NADP(+) is bound by residues Thr-237, 269–270, 299–300, Lys-309, 337–338, and Glu-376; these read VA, SR, and GL.

Belongs to the ferredoxin--NADP reductase type 1 family. FAD is required as a cofactor.

It localises to the plastid. Its subcellular location is the chloroplast. It catalyses the reaction 2 reduced [2Fe-2S]-[ferredoxin] + NADP(+) + H(+) = 2 oxidized [2Fe-2S]-[ferredoxin] + NADPH. Its pathway is energy metabolism; photosynthesis. Its function is as follows. May play a key role in regulating the relative amounts of cyclic and non-cyclic electron flow to meet the demands of the plant for ATP and reducing power. Is involved in nitrate assimilation. The polypeptide is Ferredoxin--NADP reductase, root isozyme, chloroplastic (Oryza sativa subsp. japonica (Rice)).